A 91-amino-acid chain; its full sequence is MKWLVAVLVVFVAMFQYRLWVGEGSIADVVRLEREIARQEADNERLRERNKQLAAEVDALKTGDDAIEERARSDMGMIKEGETFFMIIDDQ.

At 1–3 (MKW) the chain is on the cytoplasmic side. The helical transmembrane segment at 4 to 21 (LVAVLVVFVAMFQYRLWV) threads the bilayer. The Periplasmic segment spans residues 22–91 (GEGSIADVVR…ETFFMIIDDQ (70 aa)). Residues 23-63 (EGSIADVVRLEREIARQEADNERLRERNKQLAAEVDALKTG) are a coiled coil.

It belongs to the FtsB family. In terms of assembly, part of a complex composed of FtsB, FtsL and FtsQ.

Its subcellular location is the cell inner membrane. In terms of biological role, essential cell division protein. May link together the upstream cell division proteins, which are predominantly cytoplasmic, with the downstream cell division proteins, which are predominantly periplasmic. The polypeptide is Cell division protein FtsB (Teredinibacter turnerae (strain ATCC 39867 / T7901)).